We begin with the raw amino-acid sequence, 269 residues long: Regulating synaptic membrane exocytosis protein 4 (269 aa).

Residues 115–233 (PMGDVEIGLQ…DLTTLAVGWY (119 aa)) enclose the C2 domain. Phosphoserine occurs at positions 254 and 257.

As to quaternary structure, binds PPFIA3. Does not bind RAB3.

It is found in the synapse. Its function is as follows. Regulates synaptic membrane exocytosis. In Homo sapiens (Human), this protein is Regulating synaptic membrane exocytosis protein 4 (RIMS4).